Consider the following 248-residue polypeptide: Anamorsin homolog (248 aa).

Positions 4 to 129 are N-terminal SAM-like domain; the sequence is FKGLQKSLYI…ETGSSARLSF (126 aa). Residues 130–161 are linker; sequence AKKNASAVNVWKISGDDEELIDEEELLDEEDK. Positions 172, 181, 184, and 186 each coordinate [2Fe-2S] cluster. Residues 172–186 form a fe-S binding site A region; it reads CSTTGKRKACKNCSC. 4 residues coordinate [4Fe-4S] cluster: cysteine 209, cysteine 212, cysteine 220, and cysteine 223. 2 short sequence motifs (cx2C motif) span residues 209–212 and 220–223; these read CGNC and CSTC. Residues 209–223 are fe-S binding site B; that stretch reads CGNCYLGDAFRCSTC.

The protein belongs to the anamorsin family. Monomer. [2Fe-2S] cluster is required as a cofactor. Requires [4Fe-4S] cluster as cofactor.

The protein localises to the cytoplasm. The protein resides in the mitochondrion intermembrane space. In terms of biological role, component of the cytosolic iron-sulfur (Fe-S) protein assembly (CIA) machinery. Required for the maturation of extramitochondrial Fe-S proteins. Part of an electron transfer chain functioning in an early step of cytosolic Fe-S biogenesis, facilitating the de novo assembly of a [4Fe-4S] cluster on the cytosolic Fe-S scaffold complex. Electrons are transferred from NADPH via a FAD- and FMN-containing diflavin oxidoreductase. Together with the diflavin oxidoreductase, also required for the assembly of the diferric tyrosyl radical cofactor of ribonucleotide reductase (RNR), probably by providing electrons for reduction during radical cofactor maturation in the catalytic small subunit. This is Anamorsin homolog from Drosophila yakuba (Fruit fly).